We begin with the raw amino-acid sequence, 101 residues long: NAD(P)H-quinone oxidoreductase subunit 4L, chloroplastic (101 aa).

3 helical membrane-spanning segments follow: residues 2–22 (MLEHVLVLSAYLFSIGIYGLI), 32–52 (MCLELILNAVNINFVTFSDFF), and 61–81 (IFSIFVIAIAAAEAAIGPAIV).

This sequence belongs to the complex I subunit 4L family. In terms of assembly, NDH is composed of at least 16 different subunits, 5 of which are encoded in the nucleus.

The protein localises to the plastid. It is found in the chloroplast thylakoid membrane. It carries out the reaction a plastoquinone + NADH + (n+1) H(+)(in) = a plastoquinol + NAD(+) + n H(+)(out). It catalyses the reaction a plastoquinone + NADPH + (n+1) H(+)(in) = a plastoquinol + NADP(+) + n H(+)(out). In terms of biological role, NDH shuttles electrons from NAD(P)H:plastoquinone, via FMN and iron-sulfur (Fe-S) centers, to quinones in the photosynthetic chain and possibly in a chloroplast respiratory chain. The immediate electron acceptor for the enzyme in this species is believed to be plastoquinone. Couples the redox reaction to proton translocation, and thus conserves the redox energy in a proton gradient. In Morus indica (Mulberry), this protein is NAD(P)H-quinone oxidoreductase subunit 4L, chloroplastic.